The chain runs to 365 residues: Large ribosomal subunit protein uL3 (365 aa).

The tract at residues 343-365 (RPPKKKPPVQRPQITYVSVESKQ) is disordered. Residues 354 to 365 (PQITYVSVESKQ) are compositionally biased toward polar residues.

Belongs to the universal ribosomal protein uL3 family. Part of the 50S ribosomal subunit. Forms a cluster with proteins L14 and L24e.

Functionally, one of the primary rRNA binding proteins, it binds directly near the 3'-end of the 23S rRNA, where it nucleates assembly of the 50S subunit. This chain is Large ribosomal subunit protein uL3, found in Pyrococcus furiosus (strain ATCC 43587 / DSM 3638 / JCM 8422 / Vc1).